A 521-amino-acid chain; its full sequence is Alkyl hydroperoxide reductase subunit F (521 aa).

Position 53 is an N6-acetyllysine (lysine 53). Aspartate 214–isoleucine 229 lines the FAD pocket. Residues cysteine 345 and cysteine 348 are joined by a disulfide bond. At lysine 354 the chain carries N6-acetyllysine. Residue arginine 357–alanine 371 participates in NAD(+) binding. Threonine 478 to aspartate 488 provides a ligand contact to FAD.

Belongs to the class-II pyridine nucleotide-disulfide oxidoreductase family. Homodimer. FAD serves as cofactor.

In terms of biological role, serves to protect the cell against DNA damage by alkyl hydroperoxides. It can use either NADH or NADPH as electron donor for direct reduction of redox dyes or of alkyl hydroperoxides when combined with the AhpC protein. The polypeptide is Alkyl hydroperoxide reductase subunit F (ahpF) (Escherichia coli (strain K12)).